An 85-amino-acid chain; its full sequence is Putative membrane protein insertion efficiency factor (85 aa).

Belongs to the UPF0161 family.

It localises to the cell inner membrane. Functionally, could be involved in insertion of integral membrane proteins into the membrane. This Escherichia fergusonii (strain ATCC 35469 / DSM 13698 / CCUG 18766 / IAM 14443 / JCM 21226 / LMG 7866 / NBRC 102419 / NCTC 12128 / CDC 0568-73) protein is Putative membrane protein insertion efficiency factor.